A 120-amino-acid chain; its full sequence is Ribonuclease P protein component (120 aa).

The protein belongs to the RnpA family. Consists of a catalytic RNA component (M1 or rnpB) and a protein subunit.

The catalysed reaction is Endonucleolytic cleavage of RNA, removing 5'-extranucleotides from tRNA precursor.. Its function is as follows. RNaseP catalyzes the removal of the 5'-leader sequence from pre-tRNA to produce the mature 5'-terminus. It can also cleave other RNA substrates such as 4.5S RNA. The protein component plays an auxiliary but essential role in vivo by binding to the 5'-leader sequence and broadening the substrate specificity of the ribozyme. This Thioalkalivibrio sulfidiphilus (strain HL-EbGR7) protein is Ribonuclease P protein component.